The following is a 121-amino-acid chain: Protein VraC (121 aa).

This is Protein VraC (vraC) from Staphylococcus aureus (strain MRSA252).